Here is a 192-residue protein sequence, read N- to C-terminus: MSEYLLLLVGTVLVNNFVLVKFLGLCPFMGVSSKLESAIGMSMATTFVLTLASILSYLVNQYLLLPFDLGYLRTMSFILVIAVVVQFTEMLVQKTSASLHRALGIYLPLITTNCAVLGVALLNINEDHNFFESAIFGFGAAVGFSLVLILFSAMRERLAAADVPAPFKGGAIAMVTAGLMSLAFMGFTGLVK.

6 helical membrane passes run 5 to 25, 39 to 59, 65 to 85, 102 to 122, 134 to 154, and 171 to 191; these read LLLLVGTVLVNNFVLVKFLGL, IGMSMATTFVLTLASILSYLV, LPFDLGYLRTMSFILVIAVVV, ALGIYLPLITTNCAVLGVALL, AIFGFGAAVGFSLVLILFSAM, and AIAMVTAGLMSLAFMGFTGLV.

The protein belongs to the NqrDE/RnfAE family. As to quaternary structure, the complex is composed of six subunits: RnfA, RnfB, RnfC, RnfD, RnfE and RnfG.

It is found in the cell inner membrane. Its function is as follows. Part of a membrane-bound complex that couples electron transfer with translocation of ions across the membrane. This is Ion-translocating oxidoreductase complex subunit A from Shewanella piezotolerans (strain WP3 / JCM 13877).